Consider the following 360-residue polypeptide: Inward rectifier potassium channel 13 (360 aa).

At 1-50 (MESSNCKVITPLLSQRHRRMVTKDGHSTLQTDGAPRGLVYLRDAWGTLID) the chain is on the cytoplasmic side. The chain crosses the membrane as a helical span at residues 51 to 77 (MRWRWVMLVFSASFVLHWLVFAVLWYV). The Extracellular segment spans residues 78–105 (LAEMNGDLELDHDAPPENHTICVKYITS). Positions 106-122 (FTAAFSFSLETQLTIGY) form an intramembrane region, helical; Pore-forming. The short motif at 119 to 124 (TIGYGT) is the Selectivity filter element. At 123–131 (GTMFPSGDC) the chain is on the extracellular side. Residues 132-157 (PSAIALLAIQMLLGLMLEAFITGAFV) traverse the membrane as a helical segment. Over 158 to 360 (AKIARPKNRA…FQISETGLTE (203 aa)) the chain is Cytoplasmic. Phosphoserine; by PKC is present on Ser201. Position 287 is a phosphoserine; by PKA (Ser287).

It belongs to the inward rectifier-type potassium channel (TC 1.A.2.1) family. KCNJ13 subfamily. In terms of assembly, homotetramer. Phosphorylation at Ser-201 by PKC strongly inhibits ionic currents, while phosphorylation at Ser-287 by PKA increases them.

The protein localises to the membrane. It localises to the cell membrane. It carries out the reaction K(+)(in) = K(+)(out). Its activity is regulated as follows. Inhibited by Ba(2+) and Cs(+), although sensitivity to those inhibitors is much lower than in other Kir channels. In terms of biological role, inward rectifier potassium channels are characterized by a greater tendency to allow potassium to flow into the cell rather than out of it. Their voltage dependence is regulated by the concentration of extracellular potassium; as external potassium is raised, the voltage range of the channel opening shifts to more positive voltages. The inward rectification is mainly due to the blockage of outward current by internal magnesium. KCNJ13 has a very low single channel conductance, low sensitivity to block by external barium and cesium, and no dependence of its inward rectification properties on the internal blocking particle magnesium. The protein is Inward rectifier potassium channel 13 (KCNJ13) of Cavia porcellus (Guinea pig).